The primary structure comprises 592 residues: Arginine--tRNA ligase (592 aa).

The 'HIGH' region signature appears at 131–141 (ANPTGPMHVGH).

This sequence belongs to the class-I aminoacyl-tRNA synthetase family. Monomer.

The protein resides in the cytoplasm. The catalysed reaction is tRNA(Arg) + L-arginine + ATP = L-arginyl-tRNA(Arg) + AMP + diphosphate. In Rhodospirillum rubrum (strain ATCC 11170 / ATH 1.1.1 / DSM 467 / LMG 4362 / NCIMB 8255 / S1), this protein is Arginine--tRNA ligase.